The chain runs to 501 residues: Probable cytosol aminopeptidase (501 aa).

Residues Lys-268 and Asp-273 each coordinate Mn(2+). Lys-280 is an active-site residue. Mn(2+) contacts are provided by Asp-291, Asp-350, and Glu-352. Residue Arg-354 is part of the active site.

This sequence belongs to the peptidase M17 family. It depends on Mn(2+) as a cofactor.

It localises to the cytoplasm. The catalysed reaction is Release of an N-terminal amino acid, Xaa-|-Yaa-, in which Xaa is preferably Leu, but may be other amino acids including Pro although not Arg or Lys, and Yaa may be Pro. Amino acid amides and methyl esters are also readily hydrolyzed, but rates on arylamides are exceedingly low.. The enzyme catalyses Release of an N-terminal amino acid, preferentially leucine, but not glutamic or aspartic acids.. Its function is as follows. Presumably involved in the processing and regular turnover of intracellular proteins. Catalyzes the removal of unsubstituted N-terminal amino acids from various peptides. The sequence is that of Probable cytosol aminopeptidase from Pseudoalteromonas atlantica (strain T6c / ATCC BAA-1087).